A 417-amino-acid polypeptide reads, in one-letter code: Sterile alpha motif domain-containing protein 14 (417 aa).

Positions Gln36–Ser302 are disordered. Basic residues predominate over residues Lys40 to Ser49. Phosphoserine occurs at positions 84 and 108. A compositionally biased stretch (low complexity) spans Ser138–Ser153. Positions Pro159–Ser173 are enriched in basic and acidic residues. Phosphoserine occurs at positions 173 and 179. Low complexity-rich tracts occupy residues Ser244 to Ser260 and Ser276 to Pro289. Residue Ser279 is modified to Phosphoserine. Phosphothreonine is present on Thr283. An SAM domain is found at Trp326–Ala389. The stretch at Asp375–Lys416 forms a coiled coil. Residues Ala390–Ser417 form a disordered region.

The polypeptide is Sterile alpha motif domain-containing protein 14 (Samd14) (Mus musculus (Mouse)).